The following is a 598-amino-acid chain: Centrosomal protein of 70 kDa (598 aa).

Residues 16-38 are compositionally biased toward polar residues; sequence DSTKEPLSTVTSQAQDSSLSANR. The interval 16 to 43 is disordered; it reads DSTKEPLSTVTSQAQDSSLSANRPVTEK. Coiled coils occupy residues 99–210 and 255–317; these read TRQQ…EEDR and TYKG…NIKL. The TPR repeat unit spans residues 484-517; it reads NGVYPRMNEVYARLGEMNNAVRNLQELLGLDSSS.

As to quaternary structure, directly interacts with tubulin-gamma; this interaction determines centrosomal localization.

The protein localises to the cytoplasm. It localises to the cytoskeleton. It is found in the microtubule organizing center. Its subcellular location is the centrosome. Its function is as follows. Plays a role in the organization of both preexisting and nascent microtubules in interphase cells. During mitosis, required for the organization and orientation of the mitotic spindle. This Rattus norvegicus (Rat) protein is Centrosomal protein of 70 kDa (Cep70).